We begin with the raw amino-acid sequence, 921 residues long: Isoleucine--tRNA ligase (921 aa).

Positions 57-67 match the 'HIGH' region motif; that stretch reads PYANGELHMGH. E552 is an L-isoleucyl-5'-AMP binding site. The short motif at 593 to 597 is the 'KMSKS' region element; that stretch reads KMSKS. K596 is an ATP binding site. Zn(2+)-binding residues include C888, C891, C908, and C911.

It belongs to the class-I aminoacyl-tRNA synthetase family. IleS type 1 subfamily. Monomer. It depends on Zn(2+) as a cofactor.

The protein resides in the cytoplasm. The enzyme catalyses tRNA(Ile) + L-isoleucine + ATP = L-isoleucyl-tRNA(Ile) + AMP + diphosphate. Functionally, catalyzes the attachment of isoleucine to tRNA(Ile). As IleRS can inadvertently accommodate and process structurally similar amino acids such as valine, to avoid such errors it has two additional distinct tRNA(Ile)-dependent editing activities. One activity is designated as 'pretransfer' editing and involves the hydrolysis of activated Val-AMP. The other activity is designated 'posttransfer' editing and involves deacylation of mischarged Val-tRNA(Ile). This Listeria welshimeri serovar 6b (strain ATCC 35897 / DSM 20650 / CCUG 15529 / CIP 8149 / NCTC 11857 / SLCC 5334 / V8) protein is Isoleucine--tRNA ligase.